The chain runs to 177 residues: Nucleoside triphosphate/diphosphate phosphatase (177 aa).

Residue Arg-24 is the Proton donor of the active site. Mg(2+)-binding residues include Asn-88, Asp-104, Asp-106, Asp-108, Asp-121, and Glu-124.

This sequence belongs to the Ntdp family. It depends on Mg(2+) as a cofactor.

The enzyme catalyses a ribonucleoside 5'-triphosphate + H2O = a ribonucleoside 5'-diphosphate + phosphate + H(+). It carries out the reaction a ribonucleoside 5'-diphosphate + H2O = a ribonucleoside 5'-phosphate + phosphate + H(+). Its function is as follows. Has nucleoside phosphatase activity towards nucleoside triphosphates and nucleoside diphosphates. This Geobacillus sp. (strain WCH70) protein is Nucleoside triphosphate/diphosphate phosphatase.